We begin with the raw amino-acid sequence, 202 residues long: Hypoxanthine-guanine phosphoribosyltransferase (202 aa).

Diphosphate is bound by residues lysine 66 and glycine 67. Residues glutamate 122 and aspartate 123 each contribute to the Mg(2+) site. The Proton acceptor role is filled by aspartate 126. Residues lysine 154, phenylalanine 175 to valine 176, and aspartate 182 contribute to the GMP site. Residue arginine 188 participates in diphosphate binding.

It belongs to the purine/pyrimidine phosphoribosyltransferase family. It depends on Mg(2+) as a cofactor.

Its subcellular location is the cytoplasm. It catalyses the reaction IMP + diphosphate = hypoxanthine + 5-phospho-alpha-D-ribose 1-diphosphate. The catalysed reaction is GMP + diphosphate = guanine + 5-phospho-alpha-D-ribose 1-diphosphate. It functions in the pathway purine metabolism; IMP biosynthesis via salvage pathway; IMP from hypoxanthine: step 1/1. The protein operates within purine metabolism; GMP biosynthesis via salvage pathway; GMP from guanine: step 1/1. Functionally, purine salvage pathway enzyme that catalyzes the transfer of the ribosyl-5-phosphate group from 5-phospho-alpha-D-ribose 1-diphosphate (PRPP) to the N9 position of the 6-oxopurines hypoxanthine and guanine to form the corresponding ribonucleotides IMP (inosine 5'-monophosphate) and GMP (guanosine 5'-monophosphate), with the release of PPi. The polypeptide is Hypoxanthine-guanine phosphoribosyltransferase (hpt) (Mycobacterium tuberculosis (strain CDC 1551 / Oshkosh)).